We begin with the raw amino-acid sequence, 289 residues long: 4-hydroxy-3-methylbut-2-enyl diphosphate reductase (289 aa).

Cysteine 12 lines the [4Fe-4S] cluster pocket. Residues histidine 44 and histidine 81 each contribute to the (2E)-4-hydroxy-3-methylbut-2-enyl diphosphate site. Dimethylallyl diphosphate-binding residues include histidine 44 and histidine 81. 2 residues coordinate isopentenyl diphosphate: histidine 44 and histidine 81. A [4Fe-4S] cluster-binding site is contributed by cysteine 103. Position 130 (histidine 130) interacts with (2E)-4-hydroxy-3-methylbut-2-enyl diphosphate. Histidine 130 lines the dimethylallyl diphosphate pocket. Residue histidine 130 participates in isopentenyl diphosphate binding. Glutamate 132 acts as the Proton donor in catalysis. Threonine 174 contacts (2E)-4-hydroxy-3-methylbut-2-enyl diphosphate. A [4Fe-4S] cluster-binding site is contributed by cysteine 202. The (2E)-4-hydroxy-3-methylbut-2-enyl diphosphate site is built by serine 230, asparagine 232, and serine 273. Residues serine 230, asparagine 232, and serine 273 each contribute to the dimethylallyl diphosphate site. Residues serine 230, asparagine 232, and serine 273 each contribute to the isopentenyl diphosphate site.

This sequence belongs to the IspH family. It depends on [4Fe-4S] cluster as a cofactor.

The enzyme catalyses isopentenyl diphosphate + 2 oxidized [2Fe-2S]-[ferredoxin] + H2O = (2E)-4-hydroxy-3-methylbut-2-enyl diphosphate + 2 reduced [2Fe-2S]-[ferredoxin] + 2 H(+). It carries out the reaction dimethylallyl diphosphate + 2 oxidized [2Fe-2S]-[ferredoxin] + H2O = (2E)-4-hydroxy-3-methylbut-2-enyl diphosphate + 2 reduced [2Fe-2S]-[ferredoxin] + 2 H(+). It participates in isoprenoid biosynthesis; dimethylallyl diphosphate biosynthesis; dimethylallyl diphosphate from (2E)-4-hydroxy-3-methylbutenyl diphosphate: step 1/1. It functions in the pathway isoprenoid biosynthesis; isopentenyl diphosphate biosynthesis via DXP pathway; isopentenyl diphosphate from 1-deoxy-D-xylulose 5-phosphate: step 6/6. Its function is as follows. Catalyzes the conversion of 1-hydroxy-2-methyl-2-(E)-butenyl 4-diphosphate (HMBPP) into a mixture of isopentenyl diphosphate (IPP) and dimethylallyl diphosphate (DMAPP). Acts in the terminal step of the DOXP/MEP pathway for isoprenoid precursor biosynthesis. This chain is 4-hydroxy-3-methylbut-2-enyl diphosphate reductase, found in Treponema denticola (strain ATCC 35405 / DSM 14222 / CIP 103919 / JCM 8153 / KCTC 15104).